Reading from the N-terminus, the 123-residue chain is Small ribosomal subunit protein uS12 (123 aa).

Aspartate 89 carries the 3-methylthioaspartic acid modification.

The protein belongs to the universal ribosomal protein uS12 family. In terms of assembly, part of the 30S ribosomal subunit. Contacts proteins S8 and S17. May interact with IF1 in the 30S initiation complex.

In terms of biological role, with S4 and S5 plays an important role in translational accuracy. Its function is as follows. Interacts with and stabilizes bases of the 16S rRNA that are involved in tRNA selection in the A site and with the mRNA backbone. Located at the interface of the 30S and 50S subunits, it traverses the body of the 30S subunit contacting proteins on the other side and probably holding the rRNA structure together. The combined cluster of proteins S8, S12 and S17 appears to hold together the shoulder and platform of the 30S subunit. The sequence is that of Small ribosomal subunit protein uS12 from Phenylobacterium zucineum (strain HLK1).